The chain runs to 747 residues: Histone-lysine N-methyltransferase EZH1 (747 aa).

The disordered stretch occupies residues 188 to 231; the sequence is DEEEDGHNDPSDGKQDDSKEDLPVTRKRKRHAIEGNKKSSKKQF. Residues 194–211 are compositionally biased toward basic and acidic residues; it reads HNDPSDGKQDDSKEDLPV. Lysine 327 participates in a covalent cross-link: Glycyl lysine isopeptide (Lys-Gly) (interchain with G-Cter in SUMO2). The tract at residues 368-414 is disordered; the sequence is VSASCSNASASAMAETKEGDSDRDTGNDWASSSSEANSRCQTPTKQK. Positions 369–381 are enriched in low complexity; it reads SASCSNASASAMA. Over residues 382 to 393 the composition is skewed to basic and acidic residues; the sequence is ETKEGDSDRDTG. Residues 395–414 show a composition bias toward polar residues; sequence DWASSSSEANSRCQTPTKQK. The Nuclear localization signal signature appears at 491–496; sequence QKKKRK. The region spanning 504–606 is the CXC domain; sequence CRKIQLKKDN…CKVVSCKNCS (103 aa). In terms of domain architecture, SET spans 613–728; sequence KHLLLAPSDV…AGEELFFDYR (116 aa).

It belongs to the class V-like SAM-binding methyltransferase superfamily. Histone-lysine methyltransferase family. EZ subfamily. In terms of assembly, component of the PRC2/EED-EZH1 complex, which includes EED, EZH1, SUZ12, RBBP4 and AEBP2. The PRC2/EED-EZH1 is less abundant than the PRC2/EED-EZH2 complex, has weak methyltransferase activity and compacts chromatin in the absence of the methyltransferase cofactor S-adenosyl-L-methionine (SAM). Interacts with EZHIP; the interaction blocks EZH1 methyltransferase activity. In terms of tissue distribution, expressed at high levels in kidney, adrenal gland, testis and brain.

The protein resides in the nucleus. The catalysed reaction is L-lysyl(27)-[histone H3] + 3 S-adenosyl-L-methionine = N(6),N(6),N(6)-trimethyl-L-lysyl(27)-[histone H3] + 3 S-adenosyl-L-homocysteine + 3 H(+). Its function is as follows. Polycomb group (PcG) protein. Catalytic subunit of the PRC2/EED-EZH1 complex, which methylates 'Lys-27' of histone H3, leading to transcriptional repression of the affected target gene. Able to mono-, di- and trimethylate 'Lys-27' of histone H3 to form H3K27me1, H3K27me2 and H3K27me3, respectively. Required for embryonic stem cell derivation and self-renewal, suggesting that it is involved in safeguarding embryonic stem cell identity. Compared to EZH2-containing complexes, it is less abundant in embryonic stem cells, has weak methyltransferase activity and plays a less critical role in forming H3K27me3, which is required for embryonic stem cell identity and proper differentiation. This is Histone-lysine N-methyltransferase EZH1 (Ezh1) from Mus musculus (Mouse).